A 41-amino-acid chain; its full sequence is SPbeta prophage-derived uncharacterized protein YosF (41 aa).

This chain is SPbeta prophage-derived uncharacterized protein YosF (yosF), found in Bacillus subtilis (strain 168).